We begin with the raw amino-acid sequence, 1078 residues long: Zinc finger protein 827 (1078 aa).

Positions 1 to 10 are enriched in basic and acidic residues; the sequence is MPRRKQEQPK. The segment at 1-14 is mediates direct interaction with RBBP4; that stretch reads MPRRKQEQPKRLPS. Positions 1–76 are disordered; it reads MPRRKQEQPK…PDTSLGSATP (76 aa). The RRK motif; mediates NuRD recruitment to telomeres signature appears at 3-5; the sequence is RRK. 2 stretches are compositionally biased toward polar residues: residues 33 to 42 and 62 to 76; these read YGNSSETPSE and EQST…SATP. Residues K175, K215, and K225 each participate in a glycyl lysine isopeptide (Lys-Gly) (interchain with G-Cter in SUMO2) cross-link. Residues 307 to 341 form a disordered region; the sequence is SLLPDDPLPLPSSEKKPEKVTPPPPPPPPTAQPPQ. Pro residues predominate over residues 326-338; that stretch reads VTPPPPPPPPTAQ. Residues K357 and K369 each participate in a glycyl lysine isopeptide (Lys-Gly) (interchain with G-Cter in SUMO2) cross-link. C2H2-type zinc fingers lie at residues 371 to 393, 399 to 421, and 430 to 452; these read FQCP…MVIH, HQCP…MKVH, and FQCQ…MRCH. Glycyl lysine isopeptide (Lys-Gly) (interchain with G-Cter in SUMO2) cross-links involve residues K463, K472, K520, K546, K577, K584, and K594. A disordered region spans residues 466–490; it reads IPDPDVKGSPHLSDSGCLGQQREGG. The segment at 594–640 is disordered; sequence KEEPKEEESLSMPLPRSSYVFSPEPEVSTPSVSEDPLTPQEGKGSVL. The span at 613–627 shows a compositional bias: low complexity; it reads VFSPEPEVSTPSVSE. Glycyl lysine isopeptide (Lys-Gly) (interchain with G-Cter in SUMO2) cross-links involve residues K636 and K655. K670 is covalently cross-linked (Glycyl lysine isopeptide (Lys-Gly) (interchain with G-Cter in SUMO1); alternate). A Glycyl lysine isopeptide (Lys-Gly) (interchain with G-Cter in SUMO2); alternate cross-link involves residue K670. Residues K701, K707, K739, K775, and K795 each participate in a glycyl lysine isopeptide (Lys-Gly) (interchain with G-Cter in SUMO2) cross-link. 2 consecutive C2H2-type zinc fingers follow at residues 814–836 and 842–864; these read FPCD…LSLH and YKCH…LTVH. Residues K867 and K888 each participate in a glycyl lysine isopeptide (Lys-Gly) (interchain with G-Cter in SUMO2) cross-link. C2H2-type zinc fingers lie at residues 894 to 916 and 926 to 949; these read YSCH…MSLH and ICCT…GTKH. Over residues 945–957 the composition is skewed to basic and acidic residues; the sequence is IGTKHTGDDRKTP. The interval 945–990 is disordered; that stretch reads IGTKHTGDDRKTPSESNSPSSSSLSTLSDSANGKDDSDSSQKNKGG. A Glycyl lysine isopeptide (Lys-Gly) (interchain with G-Cter in SUMO2) cross-link involves residue K955. Positions 958 to 974 are enriched in low complexity; it reads SESNSPSSSSLSTLSDS. Residues 976–985 show a composition bias toward basic and acidic residues; that stretch reads NGKDDSDSSQ. K1011 is covalently cross-linked (Glycyl lysine isopeptide (Lys-Gly) (interchain with G-Cter in SUMO2)). 2 consecutive C2H2-type zinc fingers follow at residues 1016–1038 and 1044–1066; these read FECV…LQIH and FECD…KKCH.

This sequence belongs to the krueppel C2H2-type zinc-finger protein family. Part of a transcription inhibitory ribonucleoprotein complex composed at least of the circular RNA circZNF827, HNRNPK and HNRNPL. Interacts with the nucleosome remodeling and histone deacetylase/NuRD complex. Interacts with RBBP4; the interaction is direct and recruits RBBP4, a component of the NuRD complex, to telomeres.

The protein resides in the nucleus. It is found in the chromosome. It localises to the telomere. Functionally, as part of a ribonucleoprotein complex composed at least of HNRNPK, HNRNPL and the circular RNA circZNF827 that nucleates the complex on chromatin, may negatively regulate the transcription of genes involved in neuronal differentiation. Could also recruit the nucleosome remodeling and histone deacetylase/NuRD complex to telomeric regions of chromosomes to regulate chromatin remodeling as part of telomere maintenance. This Mus musculus (Mouse) protein is Zinc finger protein 827 (Znf827).